The following is a 924-amino-acid chain: TBC1 domain family member 30 (924 aa).

The span at 1 to 11 shows a compositional bias: gly residues; sequence MDVLPTGGGRP. 2 disordered regions span residues 1 to 76 and 94 to 134; these read MDVL…GRTS and EEEE…RSGA. Over residues 47–59 the composition is skewed to basic and acidic residues; that stretch reads GAAERPRRSRDTW. Positions 249–457 constitute a Rab-GAP TBC domain; it reads GIPKEWRRKV…KIWDSVFFEG (209 aa). 3 disordered regions span residues 541–564, 776–806, and 838–924; these read KPTSVSGRHSKARDSDEENDPDDE, GCTATAGREGSSPEGSTRRTIEGQSPEPVFG, and HPPC…TKKR. Positions 555–564 are enriched in acidic residues; sequence SDEENDPDDE. Residue Ser-800 is modified to Phosphoserine. The span at 858-870 shows a compositional bias: polar residues; that stretch reads TSKAPQGSNSKTP. Over residues 914 to 924 the composition is skewed to gly residues; that stretch reads PGGGNSGTKKR.

Its subcellular location is the cell membrane. Its function is as follows. May act as a GTPase-activating protein for Rab family protein(s). This is TBC1 domain family member 30 (TBC1D30) from Homo sapiens (Human).